The following is a 118-amino-acid chain: Holo-[acyl-carrier-protein] synthase (118 aa).

Mg(2+)-binding residues include Asp-8 and Glu-58.

The protein belongs to the P-Pant transferase superfamily. AcpS family. It depends on Mg(2+) as a cofactor.

It localises to the cytoplasm. The enzyme catalyses apo-[ACP] + CoA = holo-[ACP] + adenosine 3',5'-bisphosphate + H(+). Its function is as follows. Transfers the 4'-phosphopantetheine moiety from coenzyme A to a Ser of acyl-carrier-protein. The protein is Holo-[acyl-carrier-protein] synthase of Streptococcus pyogenes serotype M12 (strain MGAS2096).